The primary structure comprises 337 residues: Glyceraldehyde-3-phosphate dehydrogenase (337 aa).

Residues 11–12 (TV), 34–35 (TR), and Gly-110 each bind NADP(+). 139-141 (SCN) provides a ligand contact to D-glyceraldehyde 3-phosphate. Cys-140 acts as the Nucleophile in catalysis. An NADP(+)-binding site is contributed by Asp-171. Position 194-195 (194-195 (HG)) interacts with D-glyceraldehyde 3-phosphate. Gln-300 is a binding site for NADP(+).

This sequence belongs to the glyceraldehyde-3-phosphate dehydrogenase family. As to quaternary structure, homotetramer.

It is found in the cytoplasm. The enzyme catalyses D-glyceraldehyde 3-phosphate + phosphate + NADP(+) = (2R)-3-phospho-glyceroyl phosphate + NADPH + H(+). It carries out the reaction D-glyceraldehyde 3-phosphate + phosphate + NAD(+) = (2R)-3-phospho-glyceroyl phosphate + NADH + H(+). It functions in the pathway carbohydrate degradation; glycolysis; pyruvate from D-glyceraldehyde 3-phosphate: step 1/5. Its function is as follows. Exhibits a dual-cofactor specificity, with a marked preference for NADP(+) over NAD(+). The polypeptide is Glyceraldehyde-3-phosphate dehydrogenase (gap) (Methanothermus fervidus).